Reading from the N-terminus, the 677-residue chain is MSNALSPAQRLTQIINTINEYNYQYYVQDNPSVPDAEYDRLMRELLDIENNHPDLRSPDSPSQKVGGAALSAFEQVEHEVPMLSLDNAFDEDDMQAFEKRIKDRLKISSEISFSCEPKLDGLAVSILYENGQLVRAATRGDGRVGENITTNVRTIANVPLRLRGENFPSRLEVRGEVIMTRAGFVTLNEAQIKKGKKPFVNPRNAAAGSLRQLDPKITAARPLLFYSYSLGLVENEQQPLGETHSSRLAQLSEWGLPLSKELEVTQGATQCLTYFHKIGELRSQLSYDIDGVVFKVDNIAMQQELGFVARAPRWAIAHKFPAQEEMSTLLDVEFQVGRTGAITPVARLEPTFVGGVTVSNATLHNQDEINRLGIKIGDSVIIRRAGDVIPQIVAIVADKRPDDAKDIVFPESCPVCDSAIEKLEGEAVARCTGGLYCKAQRKEAMKHFASRKALDVDGLGDKLIEQLVDAEMVKSPADFFALDIAPLSSMERMGEKSAVNLVNALEKSKKTTLAKFLYSLGIREVGEATAQNLAQHFLTLEAIEQADLDALQAVSDVGVIVAQHVFNFFKEEHNLEVISALLEAGVHWPKIEKLALDELPLAGQVYVLTGTLNVMDRNSAKAKLQSLGAKVSGSVSAKTDCLVAGEKAGSKLTKAQDLGVKVMNEDDMLAMFADLEG.

NAD(+)-binding positions include 35 to 39 (DAEYD), 84 to 85 (SL), and Glu116. Residue Lys118 is the N6-AMP-lysine intermediate of the active site. NAD(+) contacts are provided by Arg139, Glu176, Lys295, and Lys319. Zn(2+) is bound by residues Cys413, Cys416, Cys431, and Cys437. The 82-residue stretch at 596–677 (LDELPLAGQV…MLAMFADLEG (82 aa)) folds into the BRCT domain.

Belongs to the NAD-dependent DNA ligase family. LigA subfamily. The cofactor is Mg(2+). Mn(2+) serves as cofactor.

The catalysed reaction is NAD(+) + (deoxyribonucleotide)n-3'-hydroxyl + 5'-phospho-(deoxyribonucleotide)m = (deoxyribonucleotide)n+m + AMP + beta-nicotinamide D-nucleotide.. DNA ligase that catalyzes the formation of phosphodiester linkages between 5'-phosphoryl and 3'-hydroxyl groups in double-stranded DNA using NAD as a coenzyme and as the energy source for the reaction. It is essential for DNA replication and repair of damaged DNA. The sequence is that of DNA ligase from Pseudoalteromonas atlantica (strain T6c / ATCC BAA-1087).